A 267-amino-acid polypeptide reads, in one-letter code: Outer membrane protein assembly factor BamD (267 aa).

A signal peptide spans 1-16 (MKKILLTVSLGLALSA). C17 carries N-palmitoyl cysteine lipidation. The S-diacylglycerol cysteine moiety is linked to residue C17.

The protein belongs to the BamD family. Part of the Bam complex.

The protein resides in the cell outer membrane. Functionally, part of the outer membrane protein assembly complex, which is involved in assembly and insertion of beta-barrel proteins into the outer membrane. Required for efficient transformation of Neisseria meningitidis by species-related DNA. This is Outer membrane protein assembly factor BamD from Neisseria meningitidis serogroup A / serotype 4A (strain DSM 15465 / Z2491).